A 1353-amino-acid polypeptide reads, in one-letter code: ABC-type transporter MYCGRDRAFT_41235 (1353 aa).

The chain crosses the membrane as a helical span at residues 40 to 60 (ASASLWNWFFFSWLNPLIAIG). A glycan (N-linked (GlcNAc...) asparagine) is linked at Asn-121. The next 6 membrane-spanning stretches (helical) occupy residues 124-144 (VLVW…ATIT), 172-192 (IGQG…GVMA), 250-270 (FACG…ICLG), 271-291 (LTIA…AILV), 364-384 (VALS…TYAA), and 397-417 (ALTL…AFGA). In terms of domain architecture, ABC transmembrane type-1 1 spans 129–420 (WVGGAMKLFA…LPVAFGAAAD (292 aa)). The ABC transporter 1 domain maps to 460-684 (YRVQDHSDEK…EGGQMRRVVE (225 aa)). A glycan (N-linked (GlcNAc...) asparagine) is linked at Asn-481. Position 496–503 (496–503 (GPVGAGKS)) interacts with ATP. Residues 687–720 (ASKSSAEEEEVEDGDLKDGVPSTDGGDASQTTSN) are disordered. The next 6 membrane-spanning stretches (helical) occupy residues 748-768 (PAFT…GSIL), 796-816 (LGVS…FFIF), 864-882 (AFRM…VVLI), 888-907 (WFLL…GMYY), 973-993 (LSVR…LIVV), and 1002-1022 (AQGG…GFMI). The region spanning 756-1030 (ILSMLIFQGG…MIRQSAEIEN (275 aa)) is the ABC transmembrane type-1 2 domain. The ABC transporter 2 domain maps to 1070–1334 (IEMRDVVFTH…EGGHFRSLCS (265 aa)). 1104 to 1111 (GRTGSGKS) is a binding site for ATP. Residues 1191 to 1200 (QSSAETLTSS) are compositionally biased toward polar residues. The tract at residues 1191–1223 (QSSAETLTSSDQEKSSPDDAAISPSSHSHSQHL) is disordered. Residues 1208–1218 (DDAAISPSSHS) are compositionally biased toward low complexity.

It belongs to the ABC transporter superfamily. ABCC family. Conjugate transporter (TC 3.A.1.208) subfamily.

The protein resides in the cell membrane. Multidrug resistance protein; part of the gene cluster 14 that mediates the biosynthesis of a ferrichrome A-like siderophors which may contribute to organismal virulence. This is ABC-type transporter MYCGRDRAFT_41235 from Zymoseptoria tritici (strain CBS 115943 / IPO323) (Speckled leaf blotch fungus).